Reading from the N-terminus, the 147-residue chain is Cyanate hydratase (147 aa).

Active-site residues include Arg-88, Glu-91, and Ser-114.

This sequence belongs to the cyanase family.

It catalyses the reaction cyanate + hydrogencarbonate + 3 H(+) = NH4(+) + 2 CO2. In terms of biological role, catalyzes the reaction of cyanate with bicarbonate to produce ammonia and carbon dioxide. This is Cyanate hydratase from Methylobacillus flagellatus (strain ATCC 51484 / DSM 6875 / VKM B-1610 / KT).